The following is a 249-amino-acid chain: Enolase-phosphatase E1 (249 aa).

2 residues coordinate Mg(2+): aspartate 9 and glutamate 11. Substrate is bound by residues 137–138 and lysine 177; that span reads SS. Aspartate 204 contributes to the Mg(2+) binding site.

Belongs to the HAD-like hydrolase superfamily. MasA/MtnC family. In terms of assembly, monomer. Requires Mg(2+) as cofactor.

It localises to the cytoplasm. It is found in the nucleus. It catalyses the reaction 5-methylsulfanyl-2,3-dioxopentyl phosphate + H2O = 1,2-dihydroxy-5-(methylsulfanyl)pent-1-en-3-one + phosphate. Its pathway is amino-acid biosynthesis; L-methionine biosynthesis via salvage pathway; L-methionine from S-methyl-5-thio-alpha-D-ribose 1-phosphate: step 3/6. The protein operates within amino-acid biosynthesis; L-methionine biosynthesis via salvage pathway; L-methionine from S-methyl-5-thio-alpha-D-ribose 1-phosphate: step 4/6. Bifunctional enzyme that catalyzes the enolization of 2,3-diketo-5-methylthiopentyl-1-phosphate (DK-MTP-1-P) into the intermediate 2-hydroxy-3-keto-5-methylthiopentenyl-1-phosphate (HK-MTPenyl-1-P), which is then dephosphorylated to form the acireductone 1,2-dihydroxy-3-keto-5-methylthiopentene (DHK-MTPene). The protein is Enolase-phosphatase E1 of Lodderomyces elongisporus (strain ATCC 11503 / CBS 2605 / JCM 1781 / NBRC 1676 / NRRL YB-4239) (Yeast).